The sequence spans 276 residues: Elongation factor Ts (276 aa).

The involved in Mg(2+) ion dislocation from EF-Tu stretch occupies residues 79-82; that stretch reads TDFV.

The protein belongs to the EF-Ts family.

It localises to the cytoplasm. Functionally, associates with the EF-Tu.GDP complex and induces the exchange of GDP to GTP. It remains bound to the aminoacyl-tRNA.EF-Tu.GTP complex up to the GTP hydrolysis stage on the ribosome. In Buchnera aphidicola subsp. Cinara cedri (strain Cc), this protein is Elongation factor Ts.